A 779-amino-acid polypeptide reads, in one-letter code: Serine/threonine-protein kinase SIK1 (779 aa).

In terms of domain architecture, Protein kinase spans 27–278 (YDVERTLGKG…IAQIRQHRWM (252 aa)). ATP contacts are provided by residues 33–41 (LGKGNFAVV) and K56. The active-site Proton acceptor is the D149. Phosphothreonine; by LKB1 and GSK3-beta is present on T182. S186 is modified (phosphoserine; by autocatalysis). In terms of domain architecture, UBA spans 303-343 (DYNEQVLGIMQALGIDRQRTIESLQNSSYNHFAAIYYLLLE). T322 bears the Phosphothreonine; by CaMK1 mark. 2 disordered regions span residues 350–375 (SAQPSSRPTPAPTRQPQLRSSDLSSL) and 449–472 (EARQGPSLEEEQEVQEPLPGSTGR). The segment covering 363–373 (RQPQLRSSDLS) has biased composition (polar residues). Phosphoserine; by PKA is present on S577. Positions 586–612 (KAFRQQLRKNARTKGFLGLNKIKGLAR) are RK-rich region. The tract at residues 621 to 641 (TPRGGMSTFHTPAPSSGLQGC) is disordered. Positions 628-641 (TFHTPAPSSGLQGC) are enriched in polar residues.

The protein belongs to the protein kinase superfamily. CAMK Ser/Thr protein kinase family. AMPK subfamily. As to quaternary structure, interacts (when phosphorylated on Thr-182 and Ser-186) with YWHAZ. Interacts with ATP1A1. Mg(2+) is required as a cofactor. In terms of processing, phosphorylated at Thr-182 by STK11/LKB1 in complex with STE20-related adapter-alpha (STRADA) pseudo kinase and CAB39, leading to its activation. Phosphorylation at Thr-182 promotes autophosphorylation at Ser-186, which is required for sustained activity. Autophosphorylation at Ser-186 is maintained by sequential phosphorylation at Thr-182 by GSK3-beta. GSK3-beta cannot initiate phosphorylation at Thr-182, it can only maintain it. Phosphorylation at Ser-577 by PKA promotes translocation to the cytoplasm. Phosphorylation at Thr-322 by CaMK1 following intracellular sodium concentration leads to activation. In terms of tissue distribution, expressed in lung, skin, ovary, heart and stomach. No expression in brain, liver or adult skeletal muscle but is present in skeletal muscle progenitor cells of the somite beginning at 9.5 dpc. Present at 8.0 dpc in the monolayer of presumptive myocardial cells but rapidly down-regulated at 8.5 dpc upon primitive ventricle formation, although still present in myocardial cells that will populate the primitive atrium and bulbus cordis. At 9.5 dpc expression is down-regulated in the primitive atrium but observed in the sinus venosus and truncus arteriosus.

The protein localises to the cytoplasm. Its subcellular location is the nucleus. It catalyses the reaction L-seryl-[protein] + ATP = O-phospho-L-seryl-[protein] + ADP + H(+). It carries out the reaction L-threonyl-[protein] + ATP = O-phospho-L-threonyl-[protein] + ADP + H(+). With respect to regulation, activated by phosphorylation on Thr-182. Also activated by phosphorylation on Thr-322 in response to increases in intracellular sodium in parallel with elevations in intracellular calcium through the reversible sodium/calcium exchanger. Serine/threonine-protein kinase involved in various processes such as cell cycle regulation, gluconeogenesis and lipogenesis regulation, muscle growth and differentiation and tumor suppression. Phosphorylates HDAC4, HDAC5, PPME1, SREBF1, CRTC1/TORC1 and CRTC2/TORC2. Acts as a tumor suppressor and plays a key role in p53/TP53-dependent anoikis, a type of apoptosis triggered by cell detachment: required for phosphorylation of p53/TP53 in response to loss of adhesion and is able to suppress metastasis. Part of a sodium-sensing signaling network, probably by mediating phosphorylation of PPME1: following increases in intracellular sodium, SIK1 is activated by CaMK1 and phosphorylates PPME1 subunit of protein phosphatase 2A (PP2A), leading to dephosphorylation of sodium/potassium-transporting ATPase ATP1A1 and subsequent increase activity of ATP1A1. Acts as a regulator of muscle cells by phosphorylating and inhibiting class II histone deacetylases HDAC4 and HDAC5, leading to promote expression of MEF2 target genes in myocytes. Also required during cardiomyogenesis by regulating the exit of cardiomyoblasts from the cell cycle via down-regulation of CDKN1C/p57Kip2. Acts as a regulator of hepatic gluconeogenesis by phosphorylating and repressing the CREB-specific coactivators CRTC1/TORC1 and CRTC2/TORC2, leading to inhibit CREB activity. Also regulates hepatic lipogenesis by phosphorylating and inhibiting SREBF1. In concert with CRTC1/TORC1, regulates the light-induced entrainment of the circadian clock by attenuating PER1 induction; represses CREB-mediated transcription of PER1 by phosphorylating and deactivating CRTC1/TORC1. The chain is Serine/threonine-protein kinase SIK1 (Sik1) from Mus musculus (Mouse).